The following is a 213-amino-acid chain: Phycocyanobilin lyase subunit beta (213 aa).

This sequence belongs to the CpcE/RpcE/PecE family. In terms of assembly, cpcE and CpcF associate to form a lyase.

Required for the chromophorylation of the CpcA gene product. The polypeptide is Phycocyanobilin lyase subunit beta (cpcF) (Thermosynechococcus vestitus (strain NIES-2133 / IAM M-273 / BP-1)).